The chain runs to 130 residues: Small ribosomal subunit protein uS9 (130 aa).

This sequence belongs to the universal ribosomal protein uS9 family.

The polypeptide is Small ribosomal subunit protein uS9 (Magnetococcus marinus (strain ATCC BAA-1437 / JCM 17883 / MC-1)).